We begin with the raw amino-acid sequence, 437 residues long: Enolase (437 aa).

Gln-162 contacts (2R)-2-phosphoglycerate. Glu-204 acts as the Proton donor in catalysis. Positions 251, 297, and 324 each coordinate Mg(2+). 4 residues coordinate (2R)-2-phosphoglycerate: Lys-349, Arg-378, Ser-379, and Lys-400. Lys-349 serves as the catalytic Proton acceptor.

The protein belongs to the enolase family. The cofactor is Mg(2+).

Its subcellular location is the cytoplasm. It is found in the secreted. It localises to the cell surface. The enzyme catalyses (2R)-2-phosphoglycerate = phosphoenolpyruvate + H2O. It participates in carbohydrate degradation; glycolysis; pyruvate from D-glyceraldehyde 3-phosphate: step 4/5. Catalyzes the reversible conversion of 2-phosphoglycerate (2-PG) into phosphoenolpyruvate (PEP). It is essential for the degradation of carbohydrates via glycolysis. The polypeptide is Enolase (Chlorobium phaeovibrioides (strain DSM 265 / 1930) (Prosthecochloris vibrioformis (strain DSM 265))).